A 203-amino-acid polypeptide reads, in one-letter code: MNSLTWILAVLFVTPAASYFIHVDANEEQCFFDRLTSGTKMGLMFEVAEGGFLDIDVKITGPDNKEIYKGERESSGKFTFAAHMDGVYTYCFGNKMSTMTPKAVMFTVEITEPHQQAPGAAANQDAADNAKLEEMVRELSSALMSVKHEQEYMEVRERVHRNINENTNSRVVMWAAFEAFVLVGMTVGQIFYLKRFFEVRTMV.

Positions 1-18 (MNSLTWILAVLFVTPAAS) are cleaved as a signal peptide. The Lumenal segment spans residues 19–170 (YFIHVDANEE…RNINENTNSR (152 aa)). Positions 28–110 (EQCFFDRLTS…PKAVMFTVEI (83 aa)) constitute a GOLD domain. A helical membrane pass occupies residues 171 to 191 (VVMWAAFEAFVLVGMTVGQIF). The Cytoplasmic portion of the chain corresponds to 192-203 (YLKRFFEVRTMV).

It belongs to the EMP24/GP25L family.

It is found in the cytoplasmic vesicle membrane. The protein localises to the cytoplasmic vesicle. The protein resides in the COPI-coated vesicle membrane. Its subcellular location is the golgi apparatus membrane. Functionally, may have a role in the negative regulation of lin-12 and glp-1 transport to the cell surface. May also have a role in a quality control mechanism for endoplasmic reticulum-Golgi transport; the budding of coatomer-coated and other species of coated vesicles, could bind cargo molecules to collect them into budding vesicles. Involved in regulating the expression of proteasomal subunits such as rpt-3 in order to confer resistance to proteasomal dysfunction. In Caenorhabditis elegans, this protein is Suppressor/enhancer of lin-12 protein 9 (sel-9).